We begin with the raw amino-acid sequence, 116 residues long: MSSYAIVEACGKQMWIEEGKFYDFDKLPFSKGDVFSLSDILLVKMDDSAEIGQPYLTDKYSVELRVLQHFSGPKIRVYKMRSKKKTRKTFGHRSKLTRVLVQSISKKGVAQTTCFM.

The protein belongs to the bacterial ribosomal protein bL21 family. Part of the 50S ribosomal subunit.

Its subcellular location is the plastid. It is found in the chloroplast. Its function is as follows. This protein binds to 23S rRNA. This chain is Large ribosomal subunit protein bL21c, found in Emiliania huxleyi (Coccolithophore).